The sequence spans 1222 residues: BOS complex subunit NOMO1 (1222 aa).

The signal sequence occupies residues 1-31; the sequence is MLVGQGAGPLGPAVVTAAVVLLLSGVGPAHG. Residues 32 to 1155 lie on the Extracellular side of the membrane; it reads SEDIVVGCGG…NPTRKLPEQD (1124 aa). N-linked (GlcNAc...) asparagine glycosylation is found at Asn50, Asn218, and Asn618. A helical transmembrane segment spans residues 1156–1176; sequence IAQGSYIALPLTLLVLLAGYN. At 1177 to 1222 the chain is on the cytoplasmic side; that stretch reads HDKLIPLLLQLTSRLQGVRALGQAASDNSGPEDAKRQAKKQKTRRT. The tract at residues 1198 to 1222 is disordered; sequence GQAASDNSGPEDAKRQAKKQKTRRT. The residue at position 1205 (Ser1205) is a Phosphoserine. Positions 1213–1222 are enriched in basic residues; that stretch reads QAKKQKTRRT.

As to quaternary structure, component of the back of Sec61 (BOS) complex, composed of NCLN/Nicalin, NOMO (NOMO1, NOMO2 or NOMO3) and TMEM147. The BOS complex is part of the multi-pass translocon (MPT) complex, composed of three subcomplexes, the GEL complex (composed of RAB5IF/OPTI and TMCO1), the BOS complex (composed of NCLN/Nicalin, NOMO and TMEM147) and the PAT complex (composed of WDR83OS/Asterix and CCDC47). The MPT complex associates with the SEC61 complex. Due to the strong similarity between NOMO1, NOMO2 and NOMO3, similar interaction pattern probably occur for the three gene copies. As to expression, expressed in colon tumor tissue and in adjacent normal colonic mucosa.

Its subcellular location is the endoplasmic reticulum membrane. In terms of biological role, component of the multi-pass translocon (MPT) complex that mediates insertion of multi-pass membrane proteins into the lipid bilayer of membranes. The MPT complex takes over after the SEC61 complex: following membrane insertion of the first few transmembrane segments of proteins by the SEC61 complex, the MPT complex occludes the lateral gate of the SEC61 complex to promote insertion of subsequent transmembrane regions. The chain is BOS complex subunit NOMO1 (NOMO1) from Homo sapiens (Human).